Consider the following 285-residue polypeptide: NADPH-dependent 7-cyano-7-deazaguanine reductase (285 aa).

A substrate-binding site is contributed by 91-93 (IES). Residue 93–94 (SK) participates in NADPH binding. Residue Cys-193 is the Thioimide intermediate of the active site. The active-site Proton donor is Asp-200. Residue 232–233 (HE) coordinates substrate. Residue 261 to 262 (RG) coordinates NADPH.

Belongs to the GTP cyclohydrolase I family. QueF type 2 subfamily. In terms of assembly, homodimer.

The protein localises to the cytoplasm. The enzyme catalyses 7-aminomethyl-7-carbaguanine + 2 NADP(+) = 7-cyano-7-deazaguanine + 2 NADPH + 3 H(+). It participates in tRNA modification; tRNA-queuosine biosynthesis. Its function is as follows. Catalyzes the NADPH-dependent reduction of 7-cyano-7-deazaguanine (preQ0) to 7-aminomethyl-7-deazaguanine (preQ1). In Shewanella frigidimarina (strain NCIMB 400), this protein is NADPH-dependent 7-cyano-7-deazaguanine reductase.